The following is a 78-amino-acid chain: Omega-conotoxin-like Ac6.5 (78 aa).

A signal peptide spans Met1 to Ala22. Residues Asp23–Lys42 constitute a propeptide that is removed on maturation. Intrachain disulfides connect Cys46/Cys62, Cys53/Cys65, and Cys61/Cys72. A 4-hydroxyproline mark is found at Pro55 and Pro67.

It belongs to the conotoxin O1 superfamily. Expressed by the venom duct.

It is found in the secreted. In terms of biological role, omega-conotoxins act at presynaptic membranes, they bind and block voltage-gated calcium channels (Cav). The protein is Omega-conotoxin-like Ac6.5 of Conus achatinus (Little frog cone).